Consider the following 211-residue polypeptide: Neuroendocrine protein 7B2 (211 aa).

An N-terminal signal peptide occupies residues 1 to 26 (MVSRMVSTMLSGLLFWLASGWTPAFA). Residues 106–132 (DFSEDQGYPDPPNPCPVGKTDDGCLEN) form a disordered region. Residues Cys-120 and Cys-129 are joined by a disulfide bond. Ser-140 and Ser-204 each carry phosphoserine. The segment at 173–211 (GGERRKRRSVNPYLQGQRLDNVVAKKSVPHFSDEDKDPE) is disordered.

Belongs to the 7B2 family. As to quaternary structure, interacts with PCSK2/PC2 early in the secretory pathway. Dissociation occurs at later stages. Proteolytically cleaved in the Golgi by a furin-like convertase to generate bioactive peptides. In terms of processing, sulfated on tyrosine residues.

Its subcellular location is the secreted. In terms of biological role, acts as a molecular chaperone for PCSK2/PC2, preventing its premature activation in the regulated secretory pathway. Binds to inactive PCSK2 in the endoplasmic reticulum and facilitates its transport from there to later compartments of the secretory pathway where it is proteolytically matured and activated. Also required for cleavage of PCSK2 but does not appear to be involved in its folding. Plays a role in regulating pituitary hormone secretion. The C-terminal peptide inhibits PCSK2 in vitro. The polypeptide is Neuroendocrine protein 7B2 (SCG5) (Pan troglodytes (Chimpanzee)).